The following is a 130-amino-acid chain: Protein CPn_0713/CP_0033/CPj0713/CpB0740 (130 aa).

This sequence belongs to the chlamydial CPn_0713/CT_663/TC_0034 family.

The polypeptide is Protein CPn_0713/CP_0033/CPj0713/CpB0740 (Chlamydia pneumoniae (Chlamydophila pneumoniae)).